Here is a 191-residue protein sequence, read N- to C-terminus: Ion-translocating oxidoreductase complex subunit B (191 aa).

The tract at residues 1–26 (MSAIWIAIAVLSALSLVFGGLLGYAS) is hydrophobic. One can recognise a 4Fe-4S domain in the interval 32-91 (EEDPIVEQIDAILPQSQCGQCGYPGCRPYADAVGNNGEMINKCAPGGEQTMLKLAALLNV). [4Fe-4S] cluster contacts are provided by Cys49, Cys52, Cys57, Cys74, Cys116, Cys119, Cys122, Cys126, Cys146, Cys149, Cys152, and Cys156. 2 consecutive 4Fe-4S ferredoxin-type domains span residues 107-136 (KVAWIDEANCIGCTKCIQACPVDAIVGATR) and 137-166 (AMHTVLSDICTGCDLCVAPCPTDCIEMRPV).

The protein belongs to the 4Fe4S bacterial-type ferredoxin family. RnfB subfamily. The complex is composed of six subunits: RnfA, RnfB, RnfC, RnfD, RnfE and RnfG. The cofactor is [4Fe-4S] cluster.

The protein resides in the cell inner membrane. In terms of biological role, part of a membrane-bound complex that couples electron transfer with translocation of ions across the membrane. This is Ion-translocating oxidoreductase complex subunit B from Erwinia tasmaniensis (strain DSM 17950 / CFBP 7177 / CIP 109463 / NCPPB 4357 / Et1/99).